Reading from the N-terminus, the 349-residue chain is Isopentenyl-diphosphate delta-isomerase (349 aa).

6-7 provides a ligand contact to substrate; the sequence is RK. Residues 62–64, serine 93, and asparagine 122 each bind FMN; that span reads AMT. Substrate is bound at residue glutamine 152. Residue glutamate 153 participates in Mg(2+) binding. FMN-binding positions include lysine 184, threonine 214, 258-259, and 280-281; these read GG and AG.

This sequence belongs to the IPP isomerase type 2 family. As to quaternary structure, homooctamer. Dimer of tetramers. FMN serves as cofactor. Requires NADPH as cofactor. Mg(2+) is required as a cofactor.

The protein resides in the cytoplasm. It carries out the reaction isopentenyl diphosphate = dimethylallyl diphosphate. Functionally, involved in the biosynthesis of isoprenoids. Catalyzes the 1,3-allylic rearrangement of the homoallylic substrate isopentenyl (IPP) to its allylic isomer, dimethylallyl diphosphate (DMAPP). The sequence is that of Isopentenyl-diphosphate delta-isomerase from Bacillus subtilis (strain 168).